The following is a 382-amino-acid chain: Mannan endo-1,4-beta-mannosidase (382 aa).

Residues 1–19 (MVKLFSFLLLVWVASPAFS) form the signal peptide. Substrate-binding positions include W83, N144, 147 to 151 (WDESK), and N180. E181 serves as the catalytic Proton donor/acceptor. Residues Q187, Q204, W208, W243, Y282, and H284 each coordinate substrate. Residues C195 and C262 are joined by a disulfide bond. Residue E312 is the Nucleophile of the active site. C317 and C349 are joined by a disulfide. Residues W341 and D348 each coordinate substrate. An involved in stabilization of the transition state region spans residues 346-350 (GGDCS).

This sequence belongs to the glycosyl hydrolase 5 (cellulase A) family. Monomer.

The protein resides in the secreted. It carries out the reaction Random hydrolysis of (1-&gt;4)-beta-D-mannosidic linkages in mannans, galactomannans and glucomannans.. With respect to regulation, activated particularly by Ca(2+) and Zn(2+), and to a lesser extent by Na(+), K(+), Mg(2+) and Cu(2+). Activation effect of the divalent metal ions Ca(2+), Zn(2+), Mg(2+) and Cu(2+) is reduced significantly by the addition of EDTA. Strongly inhibited by Mn(2+), Hg(2+) and Ag(+). Functionally, hydrolyzes 1,4-beta linked polysaccharide backbones of mannans. Has high activity toward locust bean gum. Also active toward konjac and beta-1,4-mannan. Hydrolyzes mannotetraose (M4) and mannopentaose (M5) to mannobiose (M2) and mannotriose (M3) with a little production of mannose (M1). Hydrolyzes beta-1,4-mannan to M2, M3 and M4. Hardly hydrolyzes M2 and M3. Does not hydrolyze p-nitrophenyl-beta-D-mannopyranoside, gua-gum, carboxymethyl cellulose, soluble starch or laminarin. In Cryptopygus antarcticus (Antarctic springtail), this protein is Mannan endo-1,4-beta-mannosidase.